We begin with the raw amino-acid sequence, 294 residues long: MPWIQVKLNATSENAEQIGDMLMEETGALSITFLDAKDTPVFEPLPGETRLWGETDILALYDAEADMDFVITQLKASRLLEEGFAHKIEQLEDKDWEREWMDNFHPMQFGKRLWICPSWREIPEPDAVNVMLDPGLAFGTGTHPTTSLCLEWLEGLDLEGKTVVDFGCGSGILAIAAIKLGAAKVIGIDIDPQAILASKDNATRNGVADQIELYLPQDQPEGLIADVVVANILAGPLRELSGIITSLVKPQGQLAMSGVLDTQAEDVASYYAEQFDLDAIVEQQEWCRISGKKK.

Residues threonine 146, glycine 167, aspartate 189, and asparagine 231 each contribute to the S-adenosyl-L-methionine site.

This sequence belongs to the methyltransferase superfamily. PrmA family.

It localises to the cytoplasm. It carries out the reaction L-lysyl-[protein] + 3 S-adenosyl-L-methionine = N(6),N(6),N(6)-trimethyl-L-lysyl-[protein] + 3 S-adenosyl-L-homocysteine + 3 H(+). Its function is as follows. Methylates ribosomal protein L11. The polypeptide is Ribosomal protein L11 methyltransferase (Aliivibrio fischeri (strain ATCC 700601 / ES114) (Vibrio fischeri)).